The following is a 393-amino-acid chain: NAD(P)H-quinone oxidoreductase subunit H, chloroplastic (393 aa).

Belongs to the complex I 49 kDa subunit family. As to quaternary structure, NDH is composed of at least 16 different subunits, 5 of which are encoded in the nucleus.

It localises to the plastid. Its subcellular location is the chloroplast thylakoid membrane. The enzyme catalyses a plastoquinone + NADH + (n+1) H(+)(in) = a plastoquinol + NAD(+) + n H(+)(out). It catalyses the reaction a plastoquinone + NADPH + (n+1) H(+)(in) = a plastoquinol + NADP(+) + n H(+)(out). Its function is as follows. NDH shuttles electrons from NAD(P)H:plastoquinone, via FMN and iron-sulfur (Fe-S) centers, to quinones in the photosynthetic chain and possibly in a chloroplast respiratory chain. The immediate electron acceptor for the enzyme in this species is believed to be plastoquinone. Couples the redox reaction to proton translocation, and thus conserves the redox energy in a proton gradient. This chain is NAD(P)H-quinone oxidoreductase subunit H, chloroplastic, found in Ceratophyllum demersum (Rigid hornwort).